Here is a 70-residue protein sequence, read N- to C-terminus: Beta-insect excitatory toxin LqqIT1 (70 aa).

One can recognise an LCN-type CS-alpha/beta domain in the interval 2–65 (KNGYAVDSSG…ISDARKKYCD (64 aa)). 4 cysteine pairs are disulfide-bonded: Cys16/Cys37, Cys22/Cys42, Cys26/Cys44, and Cys38/Cys64.

This sequence belongs to the long (4 C-C) scorpion toxin superfamily. Sodium channel inhibitor family. Beta subfamily. In terms of tissue distribution, expressed by the venom gland.

The protein resides in the secreted. Its function is as follows. Excitatory insect beta-toxins induce a spastic paralysis. They bind voltage-independently at site-4 of sodium channels (Nav) and shift the voltage of activation toward more negative potentials thereby affecting sodium channel activation and promoting spontaneous and repetitive firing. In vivo, this toxin induces a fast excitatory contraction paralysis on fly larvae. It is active only on insects. The chain is Beta-insect excitatory toxin LqqIT1 from Leiurus quinquestriatus quinquestriatus (Egyptian scorpion).